We begin with the raw amino-acid sequence, 542 residues long: Prolyl 3-hydroxylase OGFOD1 (542 aa).

In terms of domain architecture, Fe2OG dioxygenase spans 134 to 239 (DLESTIDMSC…RLSISGWFHG (106 aa)). Histidine 155 and aspartate 157 together coordinate Fe cation. A 2-oxoglutarate-binding site is contributed by tyrosine 169. Position 218 (histidine 218) interacts with Fe cation. Residue arginine 230 coordinates 2-oxoglutarate. The disordered stretch occupies residues 373 to 435 (EDEMNDKKEA…TKKESSVPTC (63 aa)). Over residues 400–416 (ENNQTAISNNSQQSNEQ) the composition is skewed to polar residues.

Belongs to the TPA1 family. In terms of assembly, monomer. Fe(2+) serves as cofactor. It depends on L-ascorbate as a cofactor.

It is found in the cytoplasm. The protein resides in the nucleus. It catalyses the reaction [ribosomal protein uS12]-L-proline + 2-oxoglutarate + O2 = [ribosomal protein uS12]-(3S)-3-hydroxy-L-proline + succinate + CO2. Its function is as follows. Prolyl 3-hydroxylase that catalyzes 3-hydroxylation of 'Pro-62' of small ribosomal subunit uS12 (RPS23), thereby regulating protein translation termination efficiency. Involved in stress granule formation. The polypeptide is Prolyl 3-hydroxylase OGFOD1 (OGFOD1) (Pongo abelii (Sumatran orangutan)).